The sequence spans 333 residues: DNA-directed RNA polymerase subunit alpha (333 aa).

The segment at 1–234 is alpha N-terminal domain (alpha-NTD); that stretch reads MQISVNEFLT…QQLAAFVDLK (234 aa). Residues 248–333 form an alpha C-terminal domain (alpha-CTD) region; that stretch reads IDPILLRPVD…SLKKDDKATA (86 aa).

This sequence belongs to the RNA polymerase alpha chain family. In terms of assembly, homodimer. The RNAP catalytic core consists of 2 alpha, 1 beta, 1 beta' and 1 omega subunit. When a sigma factor is associated with the core the holoenzyme is formed, which can initiate transcription.

It carries out the reaction RNA(n) + a ribonucleoside 5'-triphosphate = RNA(n+1) + diphosphate. Its function is as follows. DNA-dependent RNA polymerase catalyzes the transcription of DNA into RNA using the four ribonucleoside triphosphates as substrates. In Pseudomonas entomophila (strain L48), this protein is DNA-directed RNA polymerase subunit alpha.